A 141-amino-acid chain; its full sequence is Nucleoside diphosphate kinase (141 aa).

Residues K10, F58, R86, T92, R103, and N113 each coordinate ATP. H116 acts as the Pros-phosphohistidine intermediate in catalysis.

This sequence belongs to the NDK family. In terms of assembly, homotetramer. Mg(2+) serves as cofactor.

Its subcellular location is the cytoplasm. It carries out the reaction a 2'-deoxyribonucleoside 5'-diphosphate + ATP = a 2'-deoxyribonucleoside 5'-triphosphate + ADP. The enzyme catalyses a ribonucleoside 5'-diphosphate + ATP = a ribonucleoside 5'-triphosphate + ADP. In terms of biological role, major role in the synthesis of nucleoside triphosphates other than ATP. The ATP gamma phosphate is transferred to the NDP beta phosphate via a ping-pong mechanism, using a phosphorylated active-site intermediate. This chain is Nucleoside diphosphate kinase, found in Ehrlichia canis (strain Jake).